The sequence spans 292 residues: Malonyl-S-ACP:biotin-protein carboxyltransferase MADD (292 aa).

Positions 1–281 (MEIMMGQGRL…RGKVMAMMDK (281 aa)) constitute a CoA carboxyltransferase C-terminal domain.

Its subcellular location is the cytoplasm. It catalyses the reaction N(6)-biotinyl-L-lysyl-[protein] + malonyl-[ACP] = N(6)-carboxybiotinyl-L-lysyl-[protein] + acetyl-[ACP]. Gamma subunit of the biotin-dependent malonate decarboxylase multienzyme complex (EC 7.2.4.4). The two subunits MADC and MADD are required for the transfer of the malonate carboxy group from the acyl-carrier protein (ACP) to the prosthetic group of the biotin carrier MADF. Required for the regeneration of ACP. This is Malonyl-S-ACP:biotin-protein carboxyltransferase MADD (madD) from Malonomonas rubra.